We begin with the raw amino-acid sequence, 474 residues long: Lipoprotein lipase (474 aa).

A signal peptide spans 1 to 27 (MESKALLLVVLGVWLQSLTAFRGGVAA). An interaction with GPIHBP1 region spans residues 32-53 (RDFSDIESKFALRTPEDTAEDT). Residues cysteine 54 and cysteine 67 are joined by a disulfide bond. Asparagine 70 carries N-linked (GlcNAc...) asparagine glycosylation. The residue at position 121 (tyrosine 121) is a 3'-nitrotyrosine. Residue serine 159 is the Nucleophile of the active site. Aspartate 183 functions as the Charge relay system in the catalytic mechanism. Position 191 is a 3'-nitrotyrosine (tyrosine 191). The Ca(2+) site is built by alanine 194, arginine 197, serine 199, and aspartate 202. Cysteine 243 and cysteine 266 are oxidised to a cystine. The segment at 243–266 (CNIGEAIRVIAERGLGDVDQLVKC) is essential for determining substrate specificity. Residue histidine 268 is the Charge relay system of the active site. Intrachain disulfides connect cysteine 291-cysteine 310 and cysteine 302-cysteine 305. A PLAT domain is found at 341-464 (FHYQVKIHFS…KGKDSAVFVK (124 aa)). Tyrosine 343 bears the 3'-nitrotyrosine mark. N-linked (GlcNAc...) asparagine glycosylation occurs at asparagine 386. Residues 417–421 (WPDWW) form an important for interaction with lipoprotein particles region. The important for heparin binding stretch occupies residues 430–434 (RIRVK). Positions 443–467 (IFCAREKVSHLQKGKDSAVFVKCHD) are interaction with GPIHBP1. Cysteine 445 and cysteine 465 form a disulfide bridge.

This sequence belongs to the AB hydrolase superfamily. Lipase family. As to quaternary structure, homodimer. Interacts with GPIHBP1 with 1:1 stoichiometry. Interacts with APOC2; the interaction activates LPL activity in the presence of lipids. Interaction with heparan sulfate proteoglycans is required to protect LPL against loss of activity. Associates with lipoprotein particles in blood plasma. Interacts with LMF1 and SEL1L; interaction with SEL1L is required to prevent aggregation of newly synthesized LPL in the endoplasmic reticulum (ER), and for normal export of LPL from the ER to the extracellular space. Interacts with SORL1; SORL1 acts as a sorting receptor, promoting LPL localization to endosomes and later to lysosomes, leading to degradation of newly synthesized LPL. Tyrosine nitration after lipopolysaccharide (LPS) challenge down-regulates the lipase activity. In terms of processing, N-glycosylated. As to expression, detected in white and brown adipose tissue and heart muscle, especially at the lumenal surface of capillaries. Detected on capillary endothelium in the lactating mammary gland. Detected in blood plasma (at protein level). Expressed in liver, epididymal fat, heart, psoas muscle, lactating mammary gland, adrenal, lung, and ovary. Highest levels in heart and adrenal gland.

The protein resides in the cell membrane. It localises to the secreted. It is found in the extracellular space. The protein localises to the extracellular matrix. It catalyses the reaction a triacylglycerol + H2O = a diacylglycerol + a fatty acid + H(+). The enzyme catalyses a 1,2-diacyl-sn-glycero-3-phosphocholine + H2O = a 2-acyl-sn-glycero-3-phosphocholine + a fatty acid + H(+). It carries out the reaction 1,2,3-tri-(9Z-octadecenoyl)-glycerol + H2O = di-(9Z)-octadecenoylglycerol + (9Z)-octadecenoate + H(+). The catalysed reaction is 1,2-di-(9Z-octadecenoyl)-sn-glycero-3-phosphocholine + H2O = (9Z-octadecenoyl)-sn-glycero-3-phosphocholine + (9Z)-octadecenoate + H(+). It catalyses the reaction 1,2,3-tributanoylglycerol + H2O = dibutanoylglycerol + butanoate + H(+). The enzyme catalyses 1,2-dihexadecanoyl-sn-glycero-3-phosphocholine + H2O = hexadecanoyl-sn-glycero-3-phosphocholine + hexadecanoate + H(+). The apolipoprotein APOC2 acts as a coactivator of LPL activity. Ca(2+) binding promotes protein stability and formation of the active homodimer. Interaction with GPIHBP1 protects LPL against inactivation by ANGPTL4. In terms of biological role, key enzyme in triglyceride metabolism. Catalyzes the hydrolysis of triglycerides from circulating chylomicrons and very low density lipoproteins (VLDL), and thereby plays an important role in lipid clearance from the blood stream, lipid utilization and storage. Although it has both phospholipase and triglyceride lipase activities it is primarily a triglyceride lipase with low but detectable phospholipase activity. Mediates margination of triglyceride-rich lipoprotein particles in capillaries. Recruited to its site of action on vascular endothelium by binding to GPIHBP1 and cell surface heparan sulfate proteoglycans. This chain is Lipoprotein lipase (Lpl), found in Mus musculus (Mouse).